Reading from the N-terminus, the 84-residue chain is MFMADAYFADTVWYVGQIIFIVAICLLVIIVVVAFLATFKLCIQLCGMCNTLGLSPSIYVFNRGRQFYEFYNDVKPPVLDVDDV.

Topologically, residues 1–18 are virion surface; that stretch reads MFMADAYFADTVWYVGQI. Residues 19–39 traverse the membrane as a helical segment; that stretch reads IFIVAICLLVIIVVVAFLATF. At 40–80 the chain is on the intravirion side; it reads KLCIQLCGMCNTLGLSPSIYVFNRGRQFYEFYNDVKPPVLD.

It belongs to the betacoronaviruses E protein family. As to quaternary structure, homopentamer. Interacts with membrane protein M in the budding compartment of the host cell, which is located between endoplasmic reticulum and the Golgi complex. Interacts with Nucleoprotein.

It localises to the host Golgi apparatus membrane. Its function is as follows. Plays a central role in virus morphogenesis and assembly. Acts as a viroporin and self-assembles in host membranes forming pentameric protein-lipid pores that allow ion transport. Also plays a role in the induction of apoptosis. This Bos taurus (Bovine) protein is Envelope small membrane protein.